We begin with the raw amino-acid sequence, 604 residues long: Procollagen galactosyltransferase 1 (604 aa).

Residues 1–18 (MHLLCFFFLLLWTGPARS) form the signal peptide. Residues Asn78, Asn166, Asn363, and Asn561 are each glycosylated (N-linked (GlcNAc...) asparagine). Residues 570–580 (RARSRKSREQE) are compositionally biased toward basic and acidic residues. The interval 570–604 (RARSRKSREQEELSSEAQNTDVLQSPLDSTARDEL) is disordered. Positions 584–597 (SEAQNTDVLQSPLD) are enriched in polar residues. Residues 601-604 (RDEL) carry the Prevents secretion from ER motif.

It belongs to the glycosyltransferase 25 family.

The protein localises to the endoplasmic reticulum lumen. It catalyses the reaction (5R)-5-hydroxy-L-lysyl-[collagen] + UDP-alpha-D-galactose = (5R)-5-O-(beta-D-galactosyl)-5-hydroxy-L-lysyl-[collagen] + UDP + H(+). Beta-galactosyltransferase that transfers beta-galactose to hydroxylysine residues of type I collagen. By acting on collagen glycosylation, facilitates the formation of collagen triple helix. This chain is Procollagen galactosyltransferase 1 (colgalt1), found in Danio rerio (Zebrafish).